The chain runs to 626 residues: UvrABC system protein C (626 aa).

In terms of domain architecture, GIY-YIG spans Pro-26–Val-105. In terms of domain architecture, UVR spans Ser-215–Leu-250.

Belongs to the UvrC family. In terms of assembly, interacts with UvrB in an incision complex.

The protein localises to the cytoplasm. In terms of biological role, the UvrABC repair system catalyzes the recognition and processing of DNA lesions. UvrC both incises the 5' and 3' sides of the lesion. The N-terminal half is responsible for the 3' incision and the C-terminal half is responsible for the 5' incision. This Acaryochloris marina (strain MBIC 11017) protein is UvrABC system protein C.